Consider the following 106-residue polypeptide: uncharacterized protein (106 aa).

This is an uncharacterized protein from Pseudanabaena tenuis (strain PCC 7409).